A 109-amino-acid chain; its full sequence is Nucleoid-associated protein Shal_1591 (109 aa).

Positions 87 to 109 (NQKEKMAEVTGGMQLPPGMKMPF) are disordered.

It belongs to the YbaB/EbfC family. In terms of assembly, homodimer.

The protein localises to the cytoplasm. It localises to the nucleoid. In terms of biological role, binds to DNA and alters its conformation. May be involved in regulation of gene expression, nucleoid organization and DNA protection. This is Nucleoid-associated protein Shal_1591 from Shewanella halifaxensis (strain HAW-EB4).